A 465-amino-acid polypeptide reads, in one-letter code: Probable Xaa-Pro aminopeptidase PEPP (465 aa).

Residues aspartate 259, aspartate 270, glutamate 395, and glutamate 435 each contribute to the Mn(2+) site.

The protein belongs to the peptidase M24B family. Mn(2+) serves as cofactor.

It carries out the reaction Release of any N-terminal amino acid, including proline, that is linked to proline, even from a dipeptide or tripeptide.. In terms of biological role, catalyzes the removal of a penultimate prolyl residue from the N-termini of peptides. This chain is Probable Xaa-Pro aminopeptidase PEPP (PEPP), found in Pyricularia oryzae (strain 70-15 / ATCC MYA-4617 / FGSC 8958) (Rice blast fungus).